Reading from the N-terminus, the 93-residue chain is Large ribosomal subunit protein bL27 (93 aa).

Residues 1–10 (MRFLLGLQYF) constitute a propeptide that is removed on maturation. The disordered stretch occupies residues 14–36 (KGVGSTKNGRDSESKRLGAKKSD). Residues 21-36 (NGRDSESKRLGAKKSD) are compositionally biased toward basic and acidic residues.

It belongs to the bacterial ribosomal protein bL27 family. In terms of processing, the N-terminus is cleaved by ribosomal processing cysteine protease Prp.

This is Large ribosomal subunit protein bL27 from Mycoplasma capricolum subsp. capricolum (strain California kid / ATCC 27343 / NCTC 10154).